We begin with the raw amino-acid sequence, 850 residues long: Mitochondrial escape protein 2 (850 aa).

Residues 1 to 44 (MLLVRTTSLNVSRMPVPCLARGIGILKGKYRLANLMNAQPSVRH) constitute a mitochondrion transit peptide. The tract at residues 44–66 (HVSSEIQQKDQQAGESNTATDTG) is disordered. Residues 45–287 (VSSEIQQKDQ…VSNFFTNHTR (243 aa)) lie on the Mitochondrial matrix side of the membrane. The segment covering 47 to 64 (SEIQQKDQQAGESNTATD) has biased composition (polar residues). The RRM domain maps to 198 to 272 (TTIVIKFQGP…TVLHIQYENI (75 aa)). The chain crosses the membrane as a helical span at residues 288–308 (IAIPVLFALLSIFAVLVFDPI). The Mitochondrial intermembrane segment spans residues 309–850 (REFSIEQKIT…CEEEIKNLSK (542 aa)). Over residues 607-621 (KGENVKEPESEKETA) the composition is skewed to basic and acidic residues. A disordered region spans residues 607-633 (KGENVKEPESEKETAENNDSDSEADTS).

It belongs to the YME2 family.

Its subcellular location is the mitochondrion inner membrane. Its function is as follows. Plays a role in maintaining the mitochondrial genome and in controlling the mtDNA escape. Involved in the regulation of mtDNA nucleotide structure and number. May have a dispensable role in early maturation of pre-rRNA. In Saccharomyces cerevisiae (strain ATCC 204508 / S288c) (Baker's yeast), this protein is Mitochondrial escape protein 2 (YME2).